The chain runs to 372 residues: Probable dual-specificity RNA methyltransferase RlmN (372 aa).

A disordered region spans residues 1–20 (MTSLPLTPVNPDAPARRAAM). Glutamate 112 acts as the Proton acceptor in catalysis. One can recognise a Radical SAM core domain in the interval 118–357 (YPDRVTVCLS…STTVRDTRGR (240 aa)). Cysteines 125 and 363 form a disulfide. Positions 132, 136, and 139 each coordinate [4Fe-4S] cluster. S-adenosyl-L-methionine-binding positions include 187-188 (GE), serine 221, 244-246 (SLH), and asparagine 320. Cysteine 363 (S-methylcysteine intermediate) is an active-site residue.

This sequence belongs to the radical SAM superfamily. RlmN family. The cofactor is [4Fe-4S] cluster.

The protein resides in the cytoplasm. It carries out the reaction adenosine(2503) in 23S rRNA + 2 reduced [2Fe-2S]-[ferredoxin] + 2 S-adenosyl-L-methionine = 2-methyladenosine(2503) in 23S rRNA + 5'-deoxyadenosine + L-methionine + 2 oxidized [2Fe-2S]-[ferredoxin] + S-adenosyl-L-homocysteine. The catalysed reaction is adenosine(37) in tRNA + 2 reduced [2Fe-2S]-[ferredoxin] + 2 S-adenosyl-L-methionine = 2-methyladenosine(37) in tRNA + 5'-deoxyadenosine + L-methionine + 2 oxidized [2Fe-2S]-[ferredoxin] + S-adenosyl-L-homocysteine. Its function is as follows. Specifically methylates position 2 of adenine 2503 in 23S rRNA and position 2 of adenine 37 in tRNAs. This chain is Probable dual-specificity RNA methyltransferase RlmN, found in Salinispora tropica (strain ATCC BAA-916 / DSM 44818 / JCM 13857 / NBRC 105044 / CNB-440).